We begin with the raw amino-acid sequence, 570 residues long: Ferroportin (570 aa).

The Cytoplasmic segment spans residues Met1 to Ser23. A helical membrane pass occupies residues Ala24–Leu53. Fe cation is bound by residues Asp39 and His43. Topologically, residues Tyr54–Ser57 are extracellular. A helical transmembrane segment spans residues Leu58–Asp84. Over Lys85–Ala87 the chain is Cytoplasmic. Residues Arg88–Asn118 form a helical membrane-spanning segment. The Extracellular portion of the chain corresponds to Glu119–Gly126. Residues Trp127 to Val162 form a helical membrane-spanning segment. Topologically, residues Ala163–Gly164 are cytoplasmic. Residues Glu165 to Ile195 form a helical membrane-spanning segment. Residues Met196 to Val202 are Extracellular-facing. A helical membrane pass occupies residues Ile203–Lys229. The Cytoplasmic portion of the chain corresponds to Thr230–Pro306. A helical membrane pass occupies residues Val307–Tyr333. Fe cation is bound at residue Cys326. Residues Thr334–Ser338 are Extracellular-facing. The helical transmembrane segment at Gly339 to Lys366 threads the bilayer. Residues Cys367–Gly368 are Cytoplasmic-facing. A helical membrane pass occupies residues Leu369 to Val391. Over Phe392 to Ile452 the chain is Extracellular. The helical transmembrane segment at Ser453–Asn482 threads the bilayer. Topologically, residues Val483 to Glu487 are cytoplasmic. A helical membrane pass occupies residues Arg488–Leu512. His506 lines the Fe cation pocket. Topologically, residues Ala513–Asn515 are extracellular. The chain crosses the membrane as a helical span at residues Pro516 to Ala541. The Cytoplasmic segment spans residues Gln542–Val570.

The protein belongs to the ferroportin (FP) (TC 2.A.100) family. SLC40A subfamily. As to quaternary structure, identified in a complex with STOM. Interacts with HAMP; affinity of the peptide hormone HAMP for SLC40A1 increases by 80-fold in the presence of iron and the interaction promotes SLC40A1 ubiquitination and degradation. Part of a complex composed of SLC40A1/ferroportin, TF/transferrin and HEPH/hephaestin that transfers iron from cells to transferrin. In terms of processing, polyubiquitinated by RNF217; leading to proteasomal degradation. Under conditions of high systemic iron levels, both the hormone peptide hepcidin/HAMP and holo(iron bound)-transferrin/TF induce the ubiquitination, internalization and proteasomal degradation of SLC40A1 to control iron release from cells.

The protein localises to the cell membrane. It localises to the basolateral cell membrane. The catalysed reaction is Fe(2+)(in) = Fe(2+)(out). With respect to regulation, during elevated serum iron levels, liver-derived hepcidin/HAMP negatively regulates cell surface SLC40A1 by inducing its ubiquitination, internalization, and degradation. Indeed, hepcidin/HAMP affinity towards ferroportin/SLC40A1 increases by 80-fold in the presence of iron. Transports Fe(2+) from the inside of a cell to the outside of the cell, playing a key role for maintaining systemic iron homeostasis. Transports iron from intestinal, splenic, hepatic cells, macrophages and erythrocytes into the blood to provide iron to other tissues. Controls therefore dietary iron uptake, iron recycling by macrophages and erythrocytes, and release of iron stores in hepatocytes. When iron is in excess in serum, circulating HAMP/hepcidin levels increase resulting in a degradation of SLC40A1, thus limiting the iron efflux to plasma. This is Ferroportin from Rattus norvegicus (Rat).